A 311-amino-acid polypeptide reads, in one-letter code: 1,4-dihydroxy-2-naphthoate octaprenyltransferase (311 aa).

Helical transmembrane passes span 31–51 (LTAS…YVKV), 53–73 (LLLF…TNLF), 104–126 (TILQ…ICAS), 131–153 (LALI…LPIA), 157–177 (FGEL…SFFI), 182–202 (INMQ…AINL), 220–240 (LAIL…FAVA), 242–262 (IWVV…VVFL), and 290–310 (TAQT…ISYF).

Belongs to the MenA family. Type 1 subfamily.

It localises to the cell membrane. The catalysed reaction is an all-trans-polyprenyl diphosphate + 1,4-dihydroxy-2-naphthoate + H(+) = a 2-demethylmenaquinol + CO2 + diphosphate. The protein operates within quinol/quinone metabolism; menaquinone biosynthesis; menaquinol from 1,4-dihydroxy-2-naphthoate: step 1/2. Functionally, conversion of 1,4-dihydroxy-2-naphthoate (DHNA) to demethylmenaquinone (DMK). The chain is 1,4-dihydroxy-2-naphthoate octaprenyltransferase from Bacillus subtilis (strain 168).